The sequence spans 379 residues: Queuine tRNA-ribosyltransferase (379 aa).

The active-site Proton acceptor is the Asp-93. Substrate-binding positions include 93–97, Asp-147, Gln-191, and Gly-218; that span reads DSGGF. The RNA binding stretch occupies residues 249–255; the sequence is GVGKPED. Asp-268 acts as the Nucleophile in catalysis. The interval 273–277 is RNA binding; important for wobble base 34 recognition; that stretch reads TRNAR. 4 residues coordinate Zn(2+): Cys-306, Cys-308, Cys-311, and His-337.

Belongs to the queuine tRNA-ribosyltransferase family. Homodimer. Within each dimer, one monomer is responsible for RNA recognition and catalysis, while the other monomer binds to the replacement base PreQ1. Zn(2+) is required as a cofactor.

It carries out the reaction 7-aminomethyl-7-carbaguanine + guanosine(34) in tRNA = 7-aminomethyl-7-carbaguanosine(34) in tRNA + guanine. It functions in the pathway tRNA modification; tRNA-queuosine biosynthesis. Functionally, catalyzes the base-exchange of a guanine (G) residue with the queuine precursor 7-aminomethyl-7-deazaguanine (PreQ1) at position 34 (anticodon wobble position) in tRNAs with GU(N) anticodons (tRNA-Asp, -Asn, -His and -Tyr). Catalysis occurs through a double-displacement mechanism. The nucleophile active site attacks the C1' of nucleotide 34 to detach the guanine base from the RNA, forming a covalent enzyme-RNA intermediate. The proton acceptor active site deprotonates the incoming PreQ1, allowing a nucleophilic attack on the C1' of the ribose to form the product. After dissociation, two additional enzymatic reactions on the tRNA convert PreQ1 to queuine (Q), resulting in the hypermodified nucleoside queuosine (7-(((4,5-cis-dihydroxy-2-cyclopenten-1-yl)amino)methyl)-7-deazaguanosine). This chain is Queuine tRNA-ribosyltransferase, found in Mannheimia succiniciproducens (strain KCTC 0769BP / MBEL55E).